Here is a 412-residue protein sequence, read N- to C-terminus: Adenosine receptor A2a (412 aa).

Residues 1-7 (MSTMGSW) are Extracellular-facing. Residues 8–32 (VYITVELAIAVLAILGNVLVCWAVW) form a helical membrane-spanning segment. Residues 33-42 (LNSNLQNVTN) are Cytoplasmic-facing. Residues 43 to 66 (YFVVSLAAADIAVGVLAIPFAITI) traverse the membrane as a helical segment. Over 67 to 77 (STGFCAACHNC) the chain is Extracellular. Intrachain disulfides connect Cys71-Cys159, Cys74-Cys146, and Cys77-Cys166. Residues 78–100 (LFFACFVLVLTQSSIFSLLAIAI) traverse the membrane as a helical segment. Over 101 to 120 (DRYIAIRIPLRYNGLVTGTR) the chain is Cytoplasmic. Residues 121 to 143 (AKGIIAVCWVLSFAIGLTPMLGW) traverse the membrane as a helical segment. Residues 144–173 (NNCSQPKEGRNYSQGCGEGQVACLFEDVVP) are Extracellular-facing. Asn145 and Asn154 each carry an N-linked (GlcNAc...) asparagine glycan. Residue Glu169 coordinates adenosine. Residues 174-198 (MNYMVYYNFFAFVLVPLLLMLGVYL) form a helical membrane-spanning segment. Residues 199 to 234 (RIFLAARRQLKQMESQPLPGERARSTLQKEVHAAKS) lie on the Cytoplasmic side of the membrane. A helical membrane pass occupies residues 235–258 (LAIIVGLFALCWLPLHIINCFTFF). Asn253 is a binding site for adenosine. A disulfide bridge connects residues Cys259 and Cys262. Residues 259-266 (CPECSHAP) lie on the Extracellular side of the membrane. A helical transmembrane segment spans residues 267–290 (LWLMYLTIVLSHTNSVVNPFIYAY). The adenosine site is built by Ser277 and His278. Over 291–412 (RIREFRQTFR…PLAQDGAGVS (122 aa)) the chain is Cytoplasmic. Residues 392–412 (GACPESPGLEGPLAQDGAGVS) form a disordered region.

Belongs to the G-protein coupled receptor 1 family. As to quaternary structure, interacts (via cytoplasmic C-terminal domain) with USP4; the interaction is direct. May interact with DRD4. Interacts with NECAB2. Interacts (via cytoplasmic C-terminal domain) with GAS2L2; interaction enhances receptor-mediated adenylyl cyclase activity. Post-translationally, ubiquitinated. Deubiquitinated by USP4; leading to stabilization and expression at the cell surface.

The protein resides in the cell membrane. Its function is as follows. Receptor for adenosine. The activity of this receptor is mediated by G proteins which activate adenylyl cyclase. The chain is Adenosine receptor A2a (ADORA2A) from Canis lupus familiaris (Dog).